Here is a 190-residue protein sequence, read N- to C-terminus: Probable RNA-binding protein 18 (190 aa).

The RRM domain occupies 25 to 106 (HRLWIGNVDP…KKLVVRWAHA (82 aa)).

The chain is Probable RNA-binding protein 18 (rbm18) from Xenopus laevis (African clawed frog).